Reading from the N-terminus, the 310-residue chain is MPVTVKMLVQKVKLDVVYATDNLLSKEITTSDISRPGLEMTGYFDYYAPERLQLFGMKEWSYLTQMTSHNRYSVLKEMFKKDTPAVVVSRNLAIPKEMVQAAKEEGISLLSSRVSTSRLAGEMSYFLDASLAERTSVHGVLMDIYGMGVLIQGDSGIGKSETGLELVKRGHRLVADDRVDVYAKDEETLWGEPAEILRHLLEIRGVGIIDVMSLYGASAVKDSSQVQLAIYLENFEAGKVFDRLGNGNEEITFSGVRIPRIRIPVKTGRNVSVVIEAAAMNHRAKEMGFDATKTFEDRLTQLITKNEVSQ.

Active-site residues include H138 and K159. 153–160 (GDSGIGKS) provides a ligand contact to ATP. Residue S160 coordinates Mg(2+). The active-site Proton acceptor; for phosphorylation activity. Proton donor; for dephosphorylation activity is the D177. Residues 201-210 (LEIRGVGIID) form an important for the catalytic mechanism of both phosphorylation and dephosphorylation region. A Mg(2+)-binding site is contributed by E202. Residue R243 is part of the active site. Residues 264–269 (PVKTGR) form an important for the catalytic mechanism of dephosphorylation region.

Belongs to the HPrK/P family. Homohexamer. Requires Mg(2+) as cofactor.

The enzyme catalyses [HPr protein]-L-serine + ATP = [HPr protein]-O-phospho-L-serine + ADP + H(+). It carries out the reaction [HPr protein]-O-phospho-L-serine + phosphate + H(+) = [HPr protein]-L-serine + diphosphate. Catalyzes the ATP- as well as the pyrophosphate-dependent phosphorylation of a specific serine residue in HPr, a phosphocarrier protein of the phosphoenolpyruvate-dependent sugar phosphotransferase system (PTS). HprK/P also catalyzes the pyrophosphate-producing, inorganic phosphate-dependent dephosphorylation (phosphorolysis) of seryl-phosphorylated HPr (P-Ser-HPr). The two antagonistic activities of HprK/P are regulated by several intracellular metabolites, which change their concentration in response to the absence or presence of rapidly metabolisable carbon sources (glucose, fructose, etc.) in the growth medium. Therefore, by controlling the phosphorylation state of HPr, HPrK/P is a sensor enzyme that plays a major role in the regulation of carbon metabolism and sugar transport: it mediates carbon catabolite repression (CCR), and regulates PTS-catalyzed carbohydrate uptake and inducer exclusion. This is HPr kinase/phosphorylase (hprK) from Streptococcus pyogenes serotype M3 (strain ATCC BAA-595 / MGAS315).